The primary structure comprises 307 residues: Homoserine O-acetyltransferase (307 aa).

Catalysis depends on Cys-142, which acts as the Acyl-thioester intermediate. Substrate contacts are provided by Lys-163 and Ser-192. Residue His-235 is the Proton acceptor of the active site. The active site involves Glu-237. Arg-249 provides a ligand contact to substrate.

Belongs to the MetA family.

It is found in the cytoplasm. The enzyme catalyses L-homoserine + acetyl-CoA = O-acetyl-L-homoserine + CoA. It functions in the pathway amino-acid biosynthesis; L-methionine biosynthesis via de novo pathway; O-acetyl-L-homoserine from L-homoserine: step 1/1. Transfers an acetyl group from acetyl-CoA to L-homoserine, forming acetyl-L-homoserine. This is Homoserine O-acetyltransferase from Rhizobium leguminosarum bv. trifolii (strain WSM2304).